A 545-amino-acid chain; its full sequence is Chaperonin GroEL (545 aa).

ATP-binding positions include 30–33, lysine 51, 87–91, glycine 415, and aspartate 495; these read TLGP and DGTTT.

Belongs to the chaperonin (HSP60) family. As to quaternary structure, forms a cylinder of 14 subunits composed of two heptameric rings stacked back-to-back. Interacts with the co-chaperonin GroES.

The protein resides in the cytoplasm. The catalysed reaction is ATP + H2O + a folded polypeptide = ADP + phosphate + an unfolded polypeptide.. Functionally, together with its co-chaperonin GroES, plays an essential role in assisting protein folding. The GroEL-GroES system forms a nano-cage that allows encapsulation of the non-native substrate proteins and provides a physical environment optimized to promote and accelerate protein folding. The polypeptide is Chaperonin GroEL (Shewanella putrefaciens (strain CN-32 / ATCC BAA-453)).